Consider the following 293-residue polypeptide: Small ribosomal subunit protein uS2 (293 aa).

Positions proline 239–tryptophan 293 are disordered. Residues alanine 247–alanine 256 show a composition bias toward low complexity.

Belongs to the universal ribosomal protein uS2 family. Component of the small ribosomal subunit. Mature ribosomes consist of a small (40S) and a large (60S) subunit. The 40S subunit contains about 33 different proteins and 1 molecule of RNA (18S). The 60S subunit contains about 49 different proteins and 3 molecules of RNA (25S, 5.8S and 5S). Interacts with RPS21.

It localises to the cytoplasm. In terms of biological role, required for the assembly and/or stability of the 40S ribosomal subunit. Required for the processing of the 20S rRNA-precursor to mature 18S rRNA in a late step of the maturation of 40S ribosomal subunits. This chain is Small ribosomal subunit protein uS2, found in Chaetomium globosum (strain ATCC 6205 / CBS 148.51 / DSM 1962 / NBRC 6347 / NRRL 1970) (Soil fungus).